The sequence spans 353 residues: UPF0283 membrane protein YcjF (353 aa).

Over residues 1 to 19 the composition is skewed to basic and acidic residues; sequence MSEPLKPRIDFAEPLKEES. The tract at residues 1–29 is disordered; that stretch reads MSEPLKPRIDFAEPLKEESTSTFKAQQTF. A compositionally biased stretch (polar residues) spans 20–29; the sequence is TSTFKAQQTF. Helical transmembrane passes span 70–90, 100–120, and 213–233; these read MVLG…IQWT, AALG…GSVI, and ESTL…FIAW.

This sequence belongs to the UPF0283 family.

The protein localises to the cell inner membrane. This chain is UPF0283 membrane protein YcjF, found in Salmonella arizonae (strain ATCC BAA-731 / CDC346-86 / RSK2980).